We begin with the raw amino-acid sequence, 127 residues long: Serum amyloid A protein (127 aa).

The N-terminal stretch at Met-1–Ser-18 is a signal peptide. Gln-19 bears the Pyrrolidone carboxylic acid mark. The interval Gly-89–Tyr-127 is disordered. The span at Glu-104 to Tyr-127 shows a compositional bias: basic and acidic residues.

The protein belongs to the SAA family. In terms of tissue distribution, expressed by the liver; secreted in plasma.

Its subcellular location is the secreted. Major acute phase reactant. Apolipoprotein of the HDL complex. In Notamacropus eugenii (Tammar wallaby), this protein is Serum amyloid A protein (SAA1).